Reading from the N-terminus, the 666-residue chain is uncharacterized protein (666 aa).

One can recognise an RNB domain in the interval 263–553; that stretch reads RFDLTTLKTY…THFQMKAYLR (291 aa).

It belongs to the RNR ribonuclease family.

This is an uncharacterized protein from Synechocystis sp. (strain ATCC 27184 / PCC 6803 / Kazusa).